The sequence spans 114 residues: Large ribosomal subunit protein uL22 (114 aa).

Belongs to the universal ribosomal protein uL22 family. As to quaternary structure, part of the 50S ribosomal subunit.

This protein binds specifically to 23S rRNA; its binding is stimulated by other ribosomal proteins, e.g. L4, L17, and L20. It is important during the early stages of 50S assembly. It makes multiple contacts with different domains of the 23S rRNA in the assembled 50S subunit and ribosome. In terms of biological role, the globular domain of the protein is located near the polypeptide exit tunnel on the outside of the subunit, while an extended beta-hairpin is found that lines the wall of the exit tunnel in the center of the 70S ribosome. The chain is Large ribosomal subunit protein uL22 from Myxococcus xanthus (strain DK1622).